Consider the following 529-residue polypeptide: Bifunctional purine biosynthesis protein PurH (529 aa).

The MGS-like domain maps to 1 to 148 (MQQPRPIRRA…KNHKDVAIVV (148 aa)).

This sequence belongs to the PurH family.

It catalyses the reaction (6R)-10-formyltetrahydrofolate + 5-amino-1-(5-phospho-beta-D-ribosyl)imidazole-4-carboxamide = 5-formamido-1-(5-phospho-D-ribosyl)imidazole-4-carboxamide + (6S)-5,6,7,8-tetrahydrofolate. The catalysed reaction is IMP + H2O = 5-formamido-1-(5-phospho-D-ribosyl)imidazole-4-carboxamide. It participates in purine metabolism; IMP biosynthesis via de novo pathway; 5-formamido-1-(5-phospho-D-ribosyl)imidazole-4-carboxamide from 5-amino-1-(5-phospho-D-ribosyl)imidazole-4-carboxamide (10-formyl THF route): step 1/1. The protein operates within purine metabolism; IMP biosynthesis via de novo pathway; IMP from 5-formamido-1-(5-phospho-D-ribosyl)imidazole-4-carboxamide: step 1/1. The protein is Bifunctional purine biosynthesis protein PurH of Serratia proteamaculans (strain 568).